Consider the following 156-residue polypeptide: Small ribosomal subunit protein uS7 (156 aa).

The protein belongs to the universal ribosomal protein uS7 family. Part of the 30S ribosomal subunit. Contacts proteins S9 and S11.

Its function is as follows. One of the primary rRNA binding proteins, it binds directly to 16S rRNA where it nucleates assembly of the head domain of the 30S subunit. Is located at the subunit interface close to the decoding center, probably blocks exit of the E-site tRNA. The polypeptide is Small ribosomal subunit protein uS7 (Synechococcus sp. (strain JA-2-3B'a(2-13)) (Cyanobacteria bacterium Yellowstone B-Prime)).